The following is a 447-amino-acid chain: Cysteine--tRNA ligase (447 aa).

Position 28 (Cys28) interacts with Zn(2+). A 'HIGH' region motif is present at residues 30–40; it reads PTVYNYIHVGN. The Zn(2+) site is built by Cys211, His236, and Glu240. Residues 268 to 272 carry the 'KMSKS' region motif; it reads KMSKS. Residue Lys271 coordinates ATP.

The protein belongs to the class-I aminoacyl-tRNA synthetase family. As to quaternary structure, monomer. Zn(2+) serves as cofactor.

Its subcellular location is the cytoplasm. The enzyme catalyses tRNA(Cys) + L-cysteine + ATP = L-cysteinyl-tRNA(Cys) + AMP + diphosphate. The protein is Cysteine--tRNA ligase of Streptococcus pneumoniae serotype 4 (strain ATCC BAA-334 / TIGR4).